A 495-amino-acid polypeptide reads, in one-letter code: Thiosulfate sulfurtransferase/rhodanese-like domain-containing protein 2 (495 aa).

At Ser-268 the chain carries Phosphoserine. The 96-residue stretch at 300–395 folds into the Rhodanese domain; that stretch reads EQGNTIILDC…YLEEFPDGFY (96 aa). The active-site Cysteine persulfide intermediate is Cys-354.

The polypeptide is Thiosulfate sulfurtransferase/rhodanese-like domain-containing protein 2 (Tstd2) (Mus musculus (Mouse)).